Consider the following 436-residue polypeptide: 3-ketoacyl-CoA thiolase (436 aa).

The active-site Acyl-thioester intermediate is the C99. Active-site proton acceptor residues include H392 and C422.

This sequence belongs to the thiolase-like superfamily. Thiolase family. As to quaternary structure, heterotetramer of two alpha chains (FadJ) and two beta chains (FadI).

The protein localises to the cytoplasm. The catalysed reaction is an acyl-CoA + acetyl-CoA = a 3-oxoacyl-CoA + CoA. The protein operates within lipid metabolism; fatty acid beta-oxidation. Catalyzes the final step of fatty acid oxidation in which acetyl-CoA is released and the CoA ester of a fatty acid two carbons shorter is formed. This is 3-ketoacyl-CoA thiolase from Escherichia coli O7:K1 (strain IAI39 / ExPEC).